Here is an 892-residue protein sequence, read N- to C-terminus: E3 ubiquitin ligase PQT3-like (892 aa).

The DWNN domain maps to isoleucine 3–proline 76. The CCHC-type zinc-finger motif lies at cysteine 210–proline 224. Position 285 is a phosphoserine (serine 285). Residues cysteine 295–cysteine 333 form an RING-type; degenerate zinc finger. Disordered stretches follow at residues aspartate 375–aspartate 408, threonine 459–asparagine 493, and methionine 623–alanine 892. Serine 404 carries the phosphoserine modification. Residues methionine 623–asparagine 644 show a composition bias toward basic and acidic residues. Residues methionine 647–arginine 666 show a composition bias toward polar residues. Residues histidine 674–proline 692 show a composition bias toward basic and acidic residues. Positions threonine 693 to serine 700 match the Nuclear localization signal motif. Residues glutamate 708–arginine 745 show a composition bias toward basic and acidic residues. Low complexity predominate over residues serine 810–serine 832. Position 866 is a phosphoserine (serine 866). Over residues serine 875–alanine 892 the composition is skewed to basic and acidic residues.

The protein resides in the nucleus. It catalyses the reaction S-ubiquitinyl-[E2 ubiquitin-conjugating enzyme]-L-cysteine + [acceptor protein]-L-lysine = [E2 ubiquitin-conjugating enzyme]-L-cysteine + N(6)-ubiquitinyl-[acceptor protein]-L-lysine.. The chain is E3 ubiquitin ligase PQT3-like from Arabidopsis thaliana (Mouse-ear cress).